A 50-amino-acid polypeptide reads, in one-letter code: Insulin (50 aa).

Intrachain disulfides connect cysteine 7–cysteine 36, cysteine 19–cysteine 49, and cysteine 35–cysteine 40.

It belongs to the insulin family. Heterodimer of a B chain and an A chain linked by two disulfide bonds.

It is found in the secreted. Its function is as follows. Insulin decreases blood glucose concentration. It increases cell permeability to monosaccharides, amino acids and fatty acids. It accelerates glycolysis, the pentose phosphate cycle, and glycogen synthesis in liver. The protein is Insulin (ins) of Oncorhynchus gorbuscha (Pink salmon).